Consider the following 201-residue polypeptide: NADH-ubiquinone oxidoreductase 21.3 kDa subunit (201 aa).

Complex I is composed of about 40 different subunits.

Its subcellular location is the mitochondrion inner membrane. The enzyme catalyses a ubiquinone + NADH + 5 H(+)(in) = a ubiquinol + NAD(+) + 4 H(+)(out). Its function is as follows. Transfer of electrons from NADH to the respiratory chain. The immediate electron acceptor for the enzyme is believed to be ubiquinone. This chain is NADH-ubiquinone oxidoreductase 21.3 kDa subunit, found in Neurospora crassa (strain ATCC 24698 / 74-OR23-1A / CBS 708.71 / DSM 1257 / FGSC 987).